The following is a 258-amino-acid chain: Tryptophan synthase alpha chain (258 aa).

Catalysis depends on proton acceptor residues Glu47 and Asp58.

The protein belongs to the TrpA family. As to quaternary structure, tetramer of two alpha and two beta chains.

It catalyses the reaction (1S,2R)-1-C-(indol-3-yl)glycerol 3-phosphate + L-serine = D-glyceraldehyde 3-phosphate + L-tryptophan + H2O. It functions in the pathway amino-acid biosynthesis; L-tryptophan biosynthesis; L-tryptophan from chorismate: step 5/5. In terms of biological role, the alpha subunit is responsible for the aldol cleavage of indoleglycerol phosphate to indole and glyceraldehyde 3-phosphate. The polypeptide is Tryptophan synthase alpha chain (Bacillus thuringiensis (strain Al Hakam)).